The primary structure comprises 716 residues: tRNA(Met) cytidine acetyltransferase TmcA (716 aa).

Residues Q192, 217–226 (GRGKSYVIGL), and R364 contribute to the ATP site. The 167-residue stretch at 401-567 (REVLARDREV…KNVALAKPLD (167 aa)) folds into the N-acetyltransferase domain. Acetyl-CoA-binding positions include 493-495 (IAV) and 500-506 (QRRGLGS).

This sequence belongs to the RNA cytidine acetyltransferase family. TmcA subfamily.

Its subcellular location is the cytoplasm. It catalyses the reaction cytidine(34) in elongator tRNA(Met) + acetyl-CoA + ATP + H2O = N(4)-acetylcytidine(34) in elongator tRNA(Met) + ADP + phosphate + CoA + H(+). Catalyzes the formation of N(4)-acetylcytidine (ac(4)C) at the wobble position of tRNA(Met), by using acetyl-CoA as an acetyl donor and ATP (or GTP). The chain is tRNA(Met) cytidine acetyltransferase TmcA from Aeropyrum pernix (strain ATCC 700893 / DSM 11879 / JCM 9820 / NBRC 100138 / K1).